The sequence spans 144 residues: Large ribosomal subunit protein uL11 (144 aa).

It belongs to the universal ribosomal protein uL11 family. Part of the ribosomal stalk of the 50S ribosomal subunit. Interacts with L10 and the large rRNA to form the base of the stalk. L10 forms an elongated spine to which L12 dimers bind in a sequential fashion forming a multimeric L10(L12)X complex. Contacts the CTC protein (RL25). Post-translationally, one or more lysine residues are methylated.

In terms of biological role, forms part of the ribosomal stalk which helps the ribosome interact with GTP-bound translation factors. This is Large ribosomal subunit protein uL11 from Deinococcus radiodurans (strain ATCC 13939 / DSM 20539 / JCM 16871 / CCUG 27074 / LMG 4051 / NBRC 15346 / NCIMB 9279 / VKM B-1422 / R1).